An 85-amino-acid chain; its full sequence is Large ribosomal subunit protein bL27 (85 aa).

The tract at residues 1-20 (MATKKAGGSTRNGRDSEAKR) is disordered.

Belongs to the bacterial ribosomal protein bL27 family.

This chain is Large ribosomal subunit protein bL27, found in Glaesserella parasuis serovar 5 (strain SH0165) (Haemophilus parasuis).